A 389-amino-acid chain; its full sequence is Urotensin-2 receptor (389 aa).

Composition is skewed to polar residues over residues 1–10 (MALTPESPSS) and 28–39 (PNATLNSSWASP). The segment at 1–39 (MALTPESPSSFPGLAAIGSSVPEPPGSPNATLNSSWASP) is disordered. The Extracellular portion of the chain corresponds to 1 to 54 (MALTPESPSSFPGLAAIGSSVPEPPGSPNATLNSSWASPTEPSSLEDLVATGAI). Asn29 and Asn33 each carry an N-linked (GlcNAc...) asparagine glycan. Residues 55 to 77 (GTLLSAMGVVGVVGNAYTLVVTC) traverse the membrane as a helical segment. Residues 78–87 (RSLRAVASMY) lie on the Cytoplasmic side of the membrane. Residues 88-113 (IYVVNLALADLLYLLSIPFIVATYIT) form a helical membrane-spanning segment. Residues 114-124 (KEWHFGDVGCR) lie on the Extracellular side of the membrane. Residues Cys123 and Cys199 are joined by a disulfide bond. A helical membrane pass occupies residues 125-146 (VLFSLDFLTMHASIFTLTVMSS). The Cytoplasmic segment spans residues 147–167 (ERYAAVLRPLDTVQRPKGYRK). A helical membrane pass occupies residues 168–186 (LLALGTWLLALLLTLPVML). At 187 to 209 (AMRLVRRGPKSLCLPAWGPRAHR) the chain is on the extracellular side. The helical transmembrane segment at 210-232 (AYLTLLFATSIAGPGLLIGLLYA) threads the bilayer. Topologically, residues 233–258 (RLARAYRRSQRASFKRARRPGARALR) are cytoplasmic. Residues 259 to 284 (LVLGIVLLFWACFLPFWLWQLLAQYR) form a helical membrane-spanning segment. The Extracellular portion of the chain corresponds to 285–297 (EAPLAPRTARIVN). A helical membrane pass occupies residues 298-318 (YLTTCLTYGNSCANPFLYTLL). The Cytoplasmic segment spans residues 319–389 (TRNYRDHLRG…PALESPGDPA (71 aa)). The tract at residues 328 to 366 (GRVRSPGSGGVRGPVPSLQPRARFQRGSGRSLSSCSPQP) is disordered. The span at 355 to 366 (SGRSLSSCSPQP) shows a compositional bias: polar residues.

It belongs to the G-protein coupled receptor 1 family.

The protein localises to the cell membrane. High affinity receptor for urotensin-2 and urotensin-2B. The activity of this receptor is mediated by a G-protein that activate a phosphatidylinositol-calcium second messenger system. This is Urotensin-2 receptor (UTS2R) from Macaca mulatta (Rhesus macaque).